We begin with the raw amino-acid sequence, 175 residues long: Inorganic pyrophosphatase (175 aa).

Residues lysine 30, arginine 44, and tyrosine 56 each contribute to the substrate site. Positions 66, 71, and 103 each coordinate Mg(2+). Tyrosine 142 contributes to the substrate binding site.

The protein belongs to the PPase family. Homohexamer. Mg(2+) is required as a cofactor.

It is found in the cytoplasm. It carries out the reaction diphosphate + H2O = 2 phosphate + H(+). Its function is as follows. Catalyzes the hydrolysis of inorganic pyrophosphate (PPi) forming two phosphate ions. The polypeptide is Inorganic pyrophosphatase (Haemophilus ducreyi (strain 35000HP / ATCC 700724)).